The sequence spans 275 residues: Calcyphosin (275 aa).

The interval 59–87 (PGTTQLTQGPAGRTLGQTQASCPEPRPSM) is disordered. EF-hand domains follow at residues 107–142 (SGIQ…LGLV), 143–178 (LDQA…PMSQ), 179–214 (AREA…RAHP), and 222–258 (TEDE…VSAS). 14 residues coordinate Ca(2+): aspartate 120, aspartate 122, serine 124, serine 126, glutamate 131, aspartate 156, asparagine 158, serine 160, threonine 162, glutamate 167, aspartate 192, serine 194, aspartate 196, and aspartate 203. Serine 126 bears the Phosphoserine; by PKA mark.

In terms of assembly, monomer. Does not form oligomers in the presence of calcium.

The protein localises to the cytoplasm. Functionally, calcium-binding protein. May play a role in cellular signaling events (Potential). This Homo sapiens (Human) protein is Calcyphosin.